Reading from the N-terminus, the 229-residue chain is Allatostatin-A (229 aa).

The N-terminal stretch at 1–18 is a signal peptide; the sequence is MLSTSLPVCFLVIGAALC. A propeptide spanning residues 19 to 48 is cleaved from the precursor; that stretch reads APERMQNDPDPHDSTAQGSDNHSDHIAPLA. Residues 23–46 form a disordered region; it reads MQNDPDPHDSTAQGSDNHSDHIAP. Leucine 58 carries the leucine amide modification. A propeptide spanning residues 62–80 is cleaved from the precursor; sequence AYSYVSEYKRLPVYNFGLG. Leucine 90 is modified (leucine amide). Positions 94–130 are excised as a propeptide; sequence SVDEDQTNDDQQQIMNNDLDQAALAEFFDQYDDAGYE. Leucine 140 carries the leucine amide modification. A propeptide spanning residues 144–152 is cleaved from the precursor; the sequence is FADDDTSEE. Residues leucine 162, leucine 173, leucine 184, leucine 196, and leucine 210 each carry the leucine amide modification. Residues 214-229 constitute a propeptide that is removed on maturation; it reads SADDASTEDSDNYFDV.

The protein belongs to the allatostatin family. As to expression, allatostatin-A-1: Expressed in antennal lobe (AL), corpora cardiaca (CC), corpora allata (CA) and gnathal ganglion (GNG) (at protein level). Expression in AL and GNG detected in most animals, in CC and CA in some animals (at protein level). Allatostatin-A-3: Expressed in antennal lobe (AL), corpora cardiaca (CC), corpora allata (CA) and gnathal ganglion (GNG) (at protein level). Expression in AL detected in all animals, in GNG, CC and CA in most animals (at protein level). Allatostatin-A-4: Expressed in antennal lobe (AL), corpora cardiaca (CC), corpora allata (CA) and gnathal ganglion (GNG) in all animals (at protein level). Allatostatin-A-5: Expressed in antennal lobe (AL), corpora cardiaca (CC), corpora allata (CA) and gnathal ganglion (GNG) in all animals (at protein level). Allatostatin-A-6: Expressed in antennal lobe (AL) and gnathal ganglion (GNG) (at protein level). Expression in AL detected in some animals, in GNG in few animals (at protein level). Not expressed in corpora cardiaca (CC) and corpora allata (CA) (at protein level). Allatostatin-A-7: Expressed in antennal lobe (AL), corpora cardiaca (CC), corpora allata (CA) and gnathal ganglion (GNG) (at protein level). Expression in AL detected in all animals, in GNG, CC and CA in most animals (at protein level). Allatostatin-A-8: Expressed in antennal lobe (AL), corpora cardiaca (CC), corpora allata (CA) and gnathal ganglion (GNG) (at protein level). Expression in AL detected in all animals, in GNG, CC and CA in most animals (at protein level). Allatostatin-A-9: Expressed in antennal lobe (AL), corpora cardiaca (CC), corpora allata (CA) and gnathal ganglion (GNG) (at protein level). Expression in AL detected in all animals, in GNG in most animals and in CC and CA in some animals (at protein level).

Its subcellular location is the secreted. Neuropeptide inhibitors of juvenile hormone synthesis and gut muscle contraction. The protein is Allatostatin-A of Agrotis ipsilon (Black cutworm moth).